The sequence spans 163 residues: Phosphopantetheine adenylyltransferase (163 aa).

Substrate is bound at residue T9. Residues 9-10 (TF) and H17 contribute to the ATP site. The substrate site is built by K41, L76, and R90. Residues 91–93 (GLR), E101, and 126–132 (HQAIASR) contribute to the ATP site.

It belongs to the bacterial CoaD family. In terms of assembly, homohexamer. It depends on Mg(2+) as a cofactor.

The protein localises to the cytoplasm. The enzyme catalyses (R)-4'-phosphopantetheine + ATP + H(+) = 3'-dephospho-CoA + diphosphate. It functions in the pathway cofactor biosynthesis; coenzyme A biosynthesis; CoA from (R)-pantothenate: step 4/5. In terms of biological role, reversibly transfers an adenylyl group from ATP to 4'-phosphopantetheine, yielding dephospho-CoA (dPCoA) and pyrophosphate. The protein is Phosphopantetheine adenylyltransferase of Caulobacter vibrioides (strain ATCC 19089 / CIP 103742 / CB 15) (Caulobacter crescentus).